Reading from the N-terminus, the 251-residue chain is Probable transcriptional regulatory protein MAB_2888c (251 aa).

The tract at residues 1 to 20 (MSGHSKWATTKHQKAVKDAR) is disordered.

The protein belongs to the TACO1 family.

The protein localises to the cytoplasm. This is Probable transcriptional regulatory protein MAB_2888c from Mycobacteroides abscessus (strain ATCC 19977 / DSM 44196 / CCUG 20993 / CIP 104536 / JCM 13569 / NCTC 13031 / TMC 1543 / L948) (Mycobacterium abscessus).